The sequence spans 1706 residues: MHQNTESVAATETLAEVPEHVLRGLPEEVRLFPSAVDKTRIGVWATKPILKGKKFGPFVGDKKKRSQVRNNVYMWEVYYPNLGWMCIDATDPEKGNWLRYVNWACSGEEQNLFPLEINRAIYYKTLKPIAPGEELLVWYNGEDNPEIAAAIEEERASARSKRSSPKSRRGKKKSHENKNKGIRTHPTQLKASELDSTFANMRGSAEGPKEEDERPLASAPEQPAPLPEVGNQDAVPQVAIPLPACEPQPEVDGKQEVTDCEVNDVEEEELEEEEELEEEEEEELGEDGVEEADMPNESSAKEPEIRCEEKPEDLLEEPQSMSNEAREDSPDVTPPPHTPRAREEANGDVLETFMFPCQHCERKFATKQGLERHMHIHISTINHAFKCKYCGKRFGTQINRRRHERRHETGLKRRPSMTLQSSEDPDDGKGENVTSKDESSPPQLGQDCLILNSEKTSQEVLNSSFVEENGEVKELHPCKYCKKVFGTHTNMRRHQRRVHERHLIPKGVRRKGGLLEEPQPPAEQAPPSQNVYVPSTEPEEEGETDDVYIMDISSNISENLNYYIDGKIQTNSSTSNCDVIEMESNSAHLYGIDCLLTPVTVEITQNIKSTQVSVTDDLLKDSPSSTNCESKKRRTASPPVLPKIKTETESDSTAPSCSLSLPLSISTAEVVSFHKEKGVYLSSKLKQLLQTQDKLTLPAGFSAAEIPKLGPVCASAPASMLPVTSSRFKRRTSSPPSSPQHSPALRDFGKPNDGKAAWTDTVLTSKKPKLESRSDSPAWSLSGRDERETGSPPCFDEYKISKEWAASSTFSSVCNQQPLDLSSGVKQKSEGTGKTPVPWESVLDLSVHKKPCDSEGKEFKENHLAQPAAKKKKPTTCMLQKVLLNEYNGVSLPTETTPEVTRSPSPCKSPDTQPDPELGPDSSCSVPTAESPPEVVGPSSPPLQTASLSSGQLPPLLTPTEPSSPPPCPPVLTVATPPPPLLPTVPLSHPSSDASPQQCPSPFSNTTAQSPLPILSPTVSPSPSPIPPVEPLMSAASPGPPTLSSSSSSSSSFPSSSCSSTSPSPPPLSAVSSVVSSGDNLEASLPAVTFKQEESESEGLKPKEEAPPAGGQSVVQETFSKNFICNVCESPFLSIKDLTKHLSVHAEEWPFKCEFCVQLFKVKTDLSEHRFLLHGVGNIFVCSVCKKEFAFLCNLQQHQRDLHPDEVCTHHEFESGTLRPQNFTDPSKANVEHMPSLPEEPLETSREEELNDSSEELYTTIKIMASGIKTKDPDVRLGLNQHYPSFKPPPFQYHHRNPMGIGVTATNFTTHNIPQTFTTAIRCTKCGKGVDNMPELHKHILACASASDKKRYTPKKNPVPLKQTVQPKNGVVVLDNSGKNAFRRMGQPKRLSFNVELGKMSPNKLKLSALKKKNQLVQKAILQKNRAAKQKADLRDTSEASSHICPYCDREFTYIGSLNKHAAFSCPKKPLSPSKRKVSHSSKKGGHASSSSSDRNSSCHPRRRTADTEIKMQSTQAPLGKTRARSTGPAQASLPSSSFRSRQNVKFAASVKSKKASSSSLRNSSPIRMAKITHVEGKKPKAVAKSHSAQLSSKSSRGLHVRVQKSKAVIQSKTALASKRRTDRFIVKSRERSGGPITRSLQLAAAADLSESRREDSSARHELKDFSYSLRLASRCGSSTASYITRQCRKVKAAAATPFQGPFLKE.

The SET domain occupies 27-140 (EEVRLFPSAV…PGEELLVWYN (114 aa)). The tract at residues 154–342 (ERASARSKRS…TPPPHTPRAR (189 aa)) is disordered. Residues 158–183 (ARSKRSSPKSRRGKKKSHENKNKGIR) show a composition bias toward basic residues. Over residues 185 to 199 (HPTQLKASELDSTFA) the composition is skewed to polar residues. A compositionally biased stretch (acidic residues) spans 258 to 294 (TDCEVNDVEEEELEEEEELEEEEEEELGEDGVEEADM). A compositionally biased stretch (basic and acidic residues) spans 299–313 (SAKEPEIRCEEKPED). 2 C2H2-type zinc fingers span residues 355-377 (FPCQ…MHIH) and 385-407 (FKCK…ERRH). Disordered stretches follow at residues 400–446 (RRRH…QLGQ), 492–542 (RRHQ…EEEG), and 618–655 (LLKD…STAP). Residue Ser416 is modified to Phosphoserine. Residues 427 to 439 (DGKGENVTSKDES) are compositionally biased toward basic and acidic residues. A C2H2-type 3 zinc finger spans residues 476–499 (HPCKYCKKVFGTHTNMRRHQRRVH). Ser637 carries the phosphoserine modification. Residues Lys645, Lys684, and Lys686 each participate in a glycyl lysine isopeptide (Lys-Gly) (interchain with G-Cter in SUMO2) cross-link. Disordered stretches follow at residues 724-794 (TSSR…SPPC), 823-1075 (SGVK…SSVV), and 1088-1112 (VTFK…AGGQ). Low complexity predominate over residues 733 to 743 (SSPPSSPQHSP). Ser738 is subject to Phosphoserine. Lys769 is covalently cross-linked (Glycyl lysine isopeptide (Lys-Gly) (interchain with G-Cter in SUMO2)). 3 positions are modified to phosphoserine: Ser776, Ser780, and Ser791. Positions 823-832 (SGVKQKSEGT) are enriched in polar residues. Residues 846–863 (SVHKKPCDSEGKEFKENH) show a composition bias toward basic and acidic residues. Residues Lys860 and Lys870 each participate in a glycyl lysine isopeptide (Lys-Gly) (interchain with G-Cter in SUMO2) cross-link. Polar residues-rich tracts occupy residues 891–912 (SLPT…SPDT) and 943–952 (LQTASLSSGQ). Residues 962–983 (PSSPPPCPPVLTVATPPPPLLP) are compositionally biased toward pro residues. Residues 993–1009 (DASPQQCPSPFSNTTAQ) are compositionally biased toward polar residues. Positions 1010–1019 (SPLPILSPTV) are enriched in low complexity. Positions 1020-1030 (SPSPSPIPPVE) are enriched in pro residues. Residues 1034–1062 (SAASPGPPTLSSSSSSSSSFPSSSCSSTS) show a composition bias toward low complexity. A compositionally biased stretch (basic and acidic residues) spans 1091 to 1106 (KQEESESEGLKPKEEA). 3 consecutive C2H2-type zinc fingers follow at residues 1123 to 1145 (FICN…LSVH), 1151 to 1174 (FKCE…FLLH), and 1180 to 1203 (FVCS…RDLH). Glycyl lysine isopeptide (Lys-Gly) (interchain with G-Cter in SUMO2) cross-links involve residues Lys1136 and Lys1140. A compositionally biased stretch (polar residues) spans 1218–1227 (LRPQNFTDPS). Positions 1218-1251 (LRPQNFTDPSKANVEHMPSLPEEPLETSREEELN) are disordered. A Glycyl lysine isopeptide (Lys-Gly) (interchain with G-Cter in SUMO2) cross-link involves residue Lys1269. Residues 1321-1343 (IRCTKCGKGVDNMPELHKHILAC) form a C2H2-type 7; atypical zinc finger. The C2H2-type 8; atypical zinc-finger motif lies at 1443–1465 (HICPYCDREFTYIGSLNKHAAFS). The tract at residues 1466–1563 (CPKKPLSPSK…KKASSSSLRN (98 aa)) is disordered. A compositionally biased stretch (basic residues) spans 1474–1486 (SKRKVSHSSKKGG). The segment covering 1487–1498 (HASSSSSDRNSS) has biased composition (low complexity). Polar residues predominate over residues 1528–1544 (GPAQASLPSSSFRSRQN). Residues 1548–1563 (AASVKSKKASSSSLRN) are compositionally biased toward low complexity.

This sequence belongs to the class V-like SAM-binding methyltransferase superfamily. As to quaternary structure, binds to the retinoblastoma protein (RB). Interacts with GATA3.

The protein resides in the nucleus. The enzyme catalyses L-lysyl-[histone] + S-adenosyl-L-methionine = N(6)-methyl-L-lysyl-[histone] + S-adenosyl-L-homocysteine + H(+). The catalysed reaction is L-lysyl(9)-[histone H3] + 3 S-adenosyl-L-methionine = N(6),N(6),N(6)-trimethyl-L-lysyl(9)-[histone H3] + 3 S-adenosyl-L-homocysteine + 3 H(+). S-adenosyl-L-methionine-dependent histone methyltransferase that specifically methylates 'Lys-9' of histone H3. May function as a DNA-binding transcription factor. Binds to the macrophage-specific TPA-responsive element (MTE) of the HMOX1 (heme oxygenase 1) gene and may act as a transcriptional activator of this gene. The polypeptide is PR domain zinc finger protein 2 (Prdm2) (Rattus norvegicus (Rat)).